The chain runs to 289 residues: MYG1 protein CT_386 (289 aa).

The protein belongs to the MYG1 family.

The sequence is that of MYG1 protein CT_386 from Chlamydia trachomatis serovar D (strain ATCC VR-885 / DSM 19411 / UW-3/Cx).